An 80-amino-acid polypeptide reads, in one-letter code: Metallothionein-like protein type 2 (80 aa).

Belongs to the metallothionein superfamily. Type 15 family.

Metallothioneins have a high content of cysteine residues that bind various heavy metals. This is Metallothionein-like protein type 2 (MTI) from Ricinus communis (Castor bean).